The sequence spans 702 residues: Arginine decarboxylase 1, chloroplastic (702 aa).

The N-terminal 52 residues, M1–Y52, are a transit peptide targeting the chloroplast. The residue at position 136 (K136) is an N6-(pyridoxal phosphate)lysine. Pyridoxal 5'-phosphate contacts are provided by residues S288, G325, and E374 to R377. I320–Y330 contributes to the substrate binding site. Y436–V437 serves as a coordination point for substrate. C524 serves as the catalytic Proton donor; shared with dimeric partner. Residue D525 coordinates substrate. Y565 serves as a coordination point for pyridoxal 5'-phosphate.

Belongs to the Orn/Lys/Arg decarboxylase class-II family. SpeA subfamily. As to quaternary structure, homodimer. Only the dimer is catalytically active, as the active sites are constructed of residues from both monomers. May form a head-to-tail homodimer. Homodimer and heterodimer with ADC2. The cofactor is pyridoxal 5'-phosphate. Requires Mg(2+) as cofactor.

It localises to the plastid. The protein resides in the chloroplast. Its subcellular location is the cytoplasm. It is found in the cytosol. It catalyses the reaction L-arginine + H(+) = agmatine + CO2. Its pathway is amine and polyamine biosynthesis; agmatine biosynthesis; agmatine from L-arginine: step 1/1. Required for the biosynthesis of putrescine. Catalyzes the first step of polyamine (PA) biosynthesis to produce putrescine from arginine. Is a minor contributor to basal arginine decarboxylase (ADC) activity and putrescine biosynthesis. Accumulation of putrescine plays a positive role in freezing tolerance. Production of polyamines is essential for normal seed development. Controls PA homeostasis which is crucial for normal plant growth and development. The sequence is that of Arginine decarboxylase 1, chloroplastic from Arabidopsis thaliana (Mouse-ear cress).